The primary structure comprises 545 residues: G-protein coupled receptor 161 (545 aa).

The Extracellular portion of the chain corresponds to 1 to 46; it reads MDFVQHALLTASRGALTMSLNSSLSYRKELSNLTATEGGEGGAVSE. N21 and N32 each carry an N-linked (GlcNAc...) asparagine glycan. The chain crosses the membrane as a helical span at residues 47-67; that stretch reads FIAIIIITVLVCLGNLVIVVT. Topologically, residues 68–80 are cytoplasmic; sequence LYKKSYLLTLSNK. Residues 81–101 form a helical membrane-spanning segment; the sequence is FVFSLTLSNFLLSVLVLPFVV. The Extracellular portion of the chain corresponds to 102–117; sequence TSSIRREWIFGVVWCN. An intrachain disulfide couples C116 to C194. N-linked (GlcNAc...) asparagine glycosylation is present at N117. A helical membrane pass occupies residues 118-139; the sequence is FSALLYLLISSASMLTLGVIAI. Over 140–159 the chain is Cytoplasmic; sequence DRYYAVLYPMVYPMKITGNR. A helical membrane pass occupies residues 160–180; sequence AVMALVYIWLHSLIGCLPPLF. Over 181–205 the chain is Extracellular; it reads GWSSVEFDEFKWMCVAAWHQEPGYT. The helical transmembrane segment at 206 to 226 threads the bilayer; the sequence is IFWQIWCALFPFLIMLVCYGF. At 227-285 the chain is on the cytoplasmic side; the sequence is IFRVARVKARKVHCGTVVTVEEDSQRSGRKNSSTSTSSSGSRRNALQGVVYSANQCKAL. A helical membrane pass occupies residues 286–306; sequence ITILVVIGAFMVTWGPYMVVI. At 307 to 322 the chain is on the extracellular side; sequence TSEALWGKNCVSPTLE. The chain crosses the membrane as a helical span at residues 323 to 343; sequence TWATWLSFTSAICHPLIYGLW. Residues 344–545 lie on the Cytoplasmic side of the membrane; that stretch reads NKTVRKELLG…EGNVLAAEQR (202 aa).

This sequence belongs to the G-protein coupled receptor 1 family.

The protein resides in the cell projection. It localises to the cilium membrane. The protein localises to the cell membrane. Its function is as follows. Key negative regulator of Shh signaling, which promotes the processing of GLI3 into GLI3R during neural tube development. Recruited by TULP3 and the IFT-A complex to primary cilia and acts as a regulator of the PKA-dependent basal repression machinery in Shh signaling by increasing cAMP levels, leading to promote the PKA-dependent processing of GLI3 into GLI3R and repress the Shh signaling. In presence of SHH, it is removed from primary cilia and is internalized into recycling endosomes, preventing its activity and allowing activation of the Shh signaling. Its ligand is unknown. The chain is G-protein coupled receptor 161 (Gpr161) from Mus musculus (Mouse).